A 292-amino-acid chain; its full sequence is E3 ubiquitin-protein ligase RNF144A (292 aa).

Residues 16–236 are TRIAD supradomain; it reads PLVSCKLCLG…YDKGPCRNKL (221 aa). Positions 20, 23, 43, 46, 111, 116, 135, 138, 143, 146, 151, 156, 185, and 188 each coordinate Zn(2+). The RING-type 1 zinc finger occupies 20 to 70; that stretch reads CKLCLGEYPVEQMTTIAQCQCIFCTLCLKQYVELLIKEGLETAISCPDAAC. The segment at 91 to 156 adopts an IBR-type zinc-finger fold; it reads QRYKKLQFER…KASWHPGQGC (66 aa). The RING-type 2; atypical zinc finger occupies 185 to 214; it reads CPKCKVYIERDEGCAQMMCKNCKHAFCWYC. The active site involves Cys-198. Residues Cys-203, Cys-206, Cys-211, Cys-214, His-226, and Cys-232 each contribute to the Zn(2+) site. Residues 250–270 form a helical membrane-spanning segment; that stretch reads VVGIFAGFGLLLLVASPFLLL.

It belongs to the RBR family. RNF144 subfamily. Self-associates. Interacts with UBE2L3. Auto-ubiquitinated.

Its subcellular location is the cell membrane. The protein localises to the cytoplasmic vesicle membrane. It is found in the endosome membrane. It localises to the endoplasmic reticulum membrane. The catalysed reaction is [E2 ubiquitin-conjugating enzyme]-S-ubiquitinyl-L-cysteine + [acceptor protein]-L-lysine = [E2 ubiquitin-conjugating enzyme]-L-cysteine + [acceptor protein]-N(6)-ubiquitinyl-L-lysine.. It functions in the pathway protein modification; protein ubiquitination. E3 ubiquitin-protein ligase which accepts ubiquitin from E2 ubiquitin-conjugating enzymes UBE2L3 and UBE2L6 in the form of a thioester and then directly transfers the ubiquitin to targeted substrates. Mediates the ubiquitination and degradation of the DNA damage kinase PRKDC during DNA damage. Positively regulates DNA virus or exogenous cytosolic DNA-triggered innate immune response by mediating STING1 ubiquitination and increasing its 'Lys-6'-linked ubiquitination and translocation from the endoplasmic reticulum to the Golgi leading to downstream signaling pathways. Plays a positive role in EGF-dependent cell proliferation by prolonging EGF/EGFR signaling during EGF stimulation through EGFR ubiquitination. Increases ERK activity independently of EGFR signaling by promoting polyubiquitination and subsequent degradation of VRK3 in the cytosol. The chain is E3 ubiquitin-protein ligase RNF144A (RNF144A) from Homo sapiens (Human).